Here is a 175-residue protein sequence, read N- to C-terminus: Gamma-crystallin B (175 aa).

Beta/gamma crystallin 'Greek key' domains are found at residues 2 to 40 (GKITFYEDRGFQGHCYECSSDCPNLQPYFSRCNSIRVDS) and 41 to 83 (GCWM…RLIP). Lys3 carries N-linked (Glc) (glycation) lysine; in vitro glycosylation. Cys19 and Cys23 form a disulfide bridge. Residues 84-88 (QHTGT) are connecting peptide. Beta/gamma crystallin 'Greek key' domains lie at 89–129 (FRMR…NVLE) and 130–172 (GSWV…RRVM).

Belongs to the beta/gamma-crystallin family.

In terms of biological role, crystallins are the dominant structural components of the vertebrate eye lens. This Bos taurus (Bovine) protein is Gamma-crystallin B (CRYGB).